The chain runs to 182 residues: Oligoribonuclease (182 aa).

Residues 8 to 171 (LIWIDLEMTG…DDIRESIKEL (164 aa)) enclose the Exonuclease domain. Tyrosine 129 is a catalytic residue.

The protein belongs to the oligoribonuclease family.

It is found in the cytoplasm. In terms of biological role, 3'-to-5' exoribonuclease specific for small oligoribonucleotides. This chain is Oligoribonuclease, found in Haemophilus influenzae (strain 86-028NP).